The primary structure comprises 567 residues: Interferon lambda receptor 1 (567 aa).

The N-terminal stretch at 1 to 22 (MSAWRIRVLATLCFLWQPRVHG) is a signal peptide. Over 23–229 (QLPPPQNVTL…YEGEWKFPFS (207 aa)) the chain is Extracellular. A Fibronectin type-III domain is found at 26–121 (PPQNVTLLSK…KSQFKEYHLD (96 aa)). The N-linked (GlcNAc...) asparagine glycan is linked to N29. 3 disulfides stabilise this stretch: C74-C82, C86-C149, and C193-C215. An N-linked (GlcNAc...) asparagine glycan is attached at N141. Residues 230–250 (ATIPVFVLLILLTSASIIWLL) traverse the membrane as a helical segment. At 251–567 (KQDAKHKKMP…YQHSHYMRRS (317 aa)) the chain is on the cytoplasmic side.

The protein belongs to the type II cytokine receptor family. Heterodimer with IL10RB.

Its subcellular location is the membrane. Its function is as follows. The IFNLR1/IL10RB dimer is a receptor for the cytokine ligands IFNL2 and IFNL3 and mediates their antiviral activity. The ligand/receptor complex stimulate the activation of the JAK/STAT signaling pathway leading to the expression of IFN-stimulated genes (ISG), which contribute to the antiviral state. Determines the cell type specificity of the lambda interferon action. Shows a more restricted pattern of expression in the epithelial tissues thereby limiting responses to lambda interferons primarily to epithelial cells of the respiratory, gastrointestinal, and reproductive tracts. The polypeptide is Interferon lambda receptor 1 (IFNLR1) (Gallus gallus (Chicken)).